Consider the following 225-residue polypeptide: Enolase-phosphatase E1 (225 aa).

It belongs to the HAD-like hydrolase superfamily. MasA/MtnC family. Monomer. Requires Mg(2+) as cofactor.

The catalysed reaction is 5-methylsulfanyl-2,3-dioxopentyl phosphate + H2O = 1,2-dihydroxy-5-(methylsulfanyl)pent-1-en-3-one + phosphate. Its pathway is amino-acid biosynthesis; L-methionine biosynthesis via salvage pathway; L-methionine from S-methyl-5-thio-alpha-D-ribose 1-phosphate: step 3/6. It participates in amino-acid biosynthesis; L-methionine biosynthesis via salvage pathway; L-methionine from S-methyl-5-thio-alpha-D-ribose 1-phosphate: step 4/6. In terms of biological role, bifunctional enzyme that catalyzes the enolization of 2,3-diketo-5-methylthiopentyl-1-phosphate (DK-MTP-1-P) into the intermediate 2-hydroxy-3-keto-5-methylthiopentenyl-1-phosphate (HK-MTPenyl-1-P), which is then dephosphorylated to form the acireductone 1,2-dihydroxy-3-keto-5-methylthiopentene (DHK-MTPene). The chain is Enolase-phosphatase E1 from Shewanella piezotolerans (strain WP3 / JCM 13877).